The primary structure comprises 709 residues: Solute carrier organic anion transporter family member 2B1 (709 aa).

Residues Met1–Gln38 form a disordered region. The Cytoplasmic segment spans residues Met1 to Lys49. Ser34 bears the Phosphoserine mark. A helical transmembrane segment spans residues Leu50–Leu69. The segment at Phe51 to Leu69 is required for E1S and taurocholate transport; required for transporter stability. The Extracellular segment spans residues Lys70 to Gly88. A helical membrane pass occupies residues Leu89–Gly109. The Cytoplasmic segment spans residues Ser110 to Pro115. A helical membrane pass occupies residues Arg116 to Glu140. Topologically, residues Pro141–His185 are extracellular. Residue Asn176 is glycosylated (N-linked (GlcNAc...) asparagine). The chain crosses the membrane as a helical span at residues Leu186–Asp215. The Cytoplasmic segment spans residues Asp216–Thr234. Residues Met235–Ile255 form a helical membrane-spanning segment. Over Asn256 to Val273 the chain is Extracellular. The chain crosses the membrane as a helical span at residues Gly274–Pro298. At Lys299–Gln366 the chain is on the cytoplasmic side. The residue at position 318 (Thr318) is a Phosphothreonine. The disordered stretch occupies residues Asp319–Asp342. Ser320 carries the post-translational modification Phosphoserine. The chain crosses the membrane as a helical span at residues Thr367 to Ala388. Residues Gly389–Tyr408 lie on the Extracellular side of the membrane. Residues Ala409–Val432 traverse the membrane as a helical segment. Over Lys433–His436 the chain is Cytoplasmic. The helical transmembrane segment at Leu437 to Leu460 threads the bilayer. Topologically, residues Phe461 to Phe564 are extracellular. The 61-residue stretch at Leu483 to Val543 folds into the Kazal-like domain. 3 disulfide bridges follow: Cys489-Cys520, Cys495-Cys516, and Cys504-Cys541. An N-linked (GlcNAc...) asparagine glycan is attached at Asn538. A helical transmembrane segment spans residues Leu565–Leu587. Over Arg588–Thr596 the chain is Cytoplasmic. Residues Leu597–Ile622 form a helical membrane-spanning segment. Residues Asp623–Gln655 are Extracellular-facing. A helical transmembrane segment spans residues Phe656–Leu673. Residues Arg674–Val709 are Cytoplasmic-facing. The tract at residues Glu679 to Val709 is disordered.

The protein belongs to the organo anion transporter (TC 2.A.60) family. As to expression, strongly expressed in the liver, at the sinusoidal membrane of the hepatocytes. Expressed in the kidney. Expressed in placental trophoblasts and syncytiotrophoblast. Expressed in the small intestine. Expressed in the blood-brain barrier, in endothelial cells of brain capillaries. Expressed in the retina, in the inner nuclear layer and the inner plexiform layer. Expressed in skelettal muscles. In testis, primarily localized to the basal membrane of Sertoli cells and weakly expressed within the tubules. Also expressed in pancreas, lung, heart, colon, ovary and spleen. Expressed in fetal brain, heart, kidney, liver, lung, skeletal muscle, spleen and pancreas. Highest expression in brain. Predominant isoform compared to isoform 3 in small intestine duodenum, kidney, placenta, and skeletal muscle. In terms of tissue distribution, predominant isoform compared to isoform 1 in liver. Also expressed in small intestine duodenum, kidney, brain, placenta, and skeletal muscle.

The protein resides in the cell membrane. It is found in the basal cell membrane. It localises to the basolateral cell membrane. Its subcellular location is the apical cell membrane. The enzyme catalyses dehydroepiandrosterone 3-sulfate(out) = dehydroepiandrosterone 3-sulfate(in). It catalyses the reaction estrone 3-sulfate(out) = estrone 3-sulfate(in). It carries out the reaction estrone 3-sulfate(out) + hydrogencarbonate(in) = estrone 3-sulfate(in) + hydrogencarbonate(out). The catalysed reaction is taurocholate(out) = taurocholate(in). The enzyme catalyses coproporphyrin III(out) = coproporphyrin III(in). It catalyses the reaction substance P(out) = substance P(in). It carries out the reaction pregnenolone sulfate(out) = pregnenolone sulfate(in). The catalysed reaction is prostaglandin E2(out) = prostaglandin E2(in). The enzyme catalyses prostaglandin D2(out) = prostaglandin D2(in). It catalyses the reaction L-thyroxine(out) = L-thyroxine(in). Its activity is regulated as follows. E1S, DHEA-S and PregS transports are regulated by steroid hormones. In the case of testosterone, transport of E1S and DHEA-S was inhibited, whereas progesterone stimulated E1S, DHEA-S and PregS uptake. Progesterone stimulates high-affinity uptake of E1S whereas it inhibits low-affinity uptake of E1S. Progesterone doesn't affect the uptake of PGE2. Functionally, mediates the Na(+)-independent transport of steroid sulfate conjugates and other specific organic anions. Responsible for the transport of estrone 3-sulfate (E1S) through the basal membrane of syncytiotrophoblast, highlighting a potential role in the placental absorption of fetal-derived sulfated steroids including the steroid hormone precursor dehydroepiandrosterone sulfate (DHEA-S). Also facilitates the uptake of sulfated steroids at the basal/sinusoidal membrane of hepatocytes, therefore accounting for the major part of organic anions clearance of liver. Mediates the intestinal uptake of sulfated steroids. Mediates the uptake of the neurosteroids DHEA-S and pregnenolone sulfate (PregS) into the endothelial cells of the blood-brain barrier as the first step to enter the brain. Also plays a role in the reuptake of neuropeptides such as substance P/TAC1 and vasoactive intestinal peptide/VIP released from retinal neurons. May act as a heme transporter that promotes cellular iron availability via heme oxygenase/HMOX2 and independently of TFRC. Also transports heme by-product coproporphyrin III (CPIII), and may be involved in their hepatic disposition. Mediates the uptake of other substrates such as prostaglandins D2 (PGD2), E1 (PGE1) and E2 (PGE2), taurocholate, L-thyroxine, leukotriene C4 and thromboxane B2. May contribute to regulate the transport of organic compounds in testis across the blood-testis-barrier. Shows a pH-sensitive substrate specificity which may be ascribed to the protonation state of the binding site and leads to a stimulation of substrate transport in an acidic microenvironment. The exact transport mechanism has not been yet deciphered but most likely involves an anion exchange, coupling the cellular uptake of organic substrate with the efflux of an anionic compound. Hydrogencarbonate/HCO3(-) acts as a probable counteranion that exchanges for organic anions. Cytoplasmic glutamate may also act as counteranion in the placenta. An inwardly directed proton gradient has also been proposed as the driving force of E1S uptake with a (H(+):E1S) stoichiometry of (1:1). Has estrone 3-sulfate (E1S) transport activity comparable with the full-length isoform 1. The polypeptide is Solute carrier organic anion transporter family member 2B1 (Homo sapiens (Human)).